Reading from the N-terminus, the 158-residue chain is NAD(P)H-quinone oxidoreductase subunit J, chloroplastic (158 aa).

The protein belongs to the complex I 30 kDa subunit family. In terms of assembly, NDH is composed of at least 16 different subunits, 5 of which are encoded in the nucleus.

The protein resides in the plastid. It localises to the chloroplast thylakoid membrane. It catalyses the reaction a plastoquinone + NADH + (n+1) H(+)(in) = a plastoquinol + NAD(+) + n H(+)(out). The catalysed reaction is a plastoquinone + NADPH + (n+1) H(+)(in) = a plastoquinol + NADP(+) + n H(+)(out). Its function is as follows. NDH shuttles electrons from NAD(P)H:plastoquinone, via FMN and iron-sulfur (Fe-S) centers, to quinones in the photosynthetic chain and possibly in a chloroplast respiratory chain. The immediate electron acceptor for the enzyme in this species is believed to be plastoquinone. Couples the redox reaction to proton translocation, and thus conserves the redox energy in a proton gradient. The protein is NAD(P)H-quinone oxidoreductase subunit J, chloroplastic of Buxus microphylla (Littleleaf boxwood).